Reading from the N-terminus, the 245-residue chain is MDGTRTVLDIKEYSDSEVQKNRVLTLEEWQGKWVTGKTIFHQEQGHQLLKKHLDAFLKGESGLKVFFPLCGKAVEMKWFADRGHSVVGVEISELGIREFFTEQNLSYSEEPIIEIPGAKVFKSSSGNISLYCCNIFDLPRTNIGKFDRIWDRGALVAVNPGDRKRYVDIMLSLTRKGFHYLLAVLSYDPTKHAGPPFFVSDAEVKRLFDSVCNIRCLEKVDALEERHKSWGIDYLVETLYLFTEK.

Ser-14 carries the post-translational modification Phosphoserine. 29-40 (WQGKWVTGKTIF) serves as a coordination point for S-adenosyl-L-methionine. Phe-40 is a substrate binding site. Lys-58 carries the post-translational modification N6-acetyllysine. Residues Leu-69, Glu-90, and Arg-152 each coordinate S-adenosyl-L-methionine.

This sequence belongs to the class I-like SAM-binding methyltransferase superfamily. TPMT family. As to quaternary structure, monomer.

Its subcellular location is the cytoplasm. It catalyses the reaction S-adenosyl-L-methionine + a thiopurine = S-adenosyl-L-homocysteine + a thiopurine S-methylether.. This is Thiopurine S-methyltransferase (TPMT) from Equus caballus (Horse).